The following is a 378-amino-acid chain: Ribosomal RNA large subunit methyltransferase G (378 aa).

It belongs to the methyltransferase superfamily. RlmG family.

The protein resides in the cytoplasm. The enzyme catalyses guanosine(1835) in 23S rRNA + S-adenosyl-L-methionine = N(2)-methylguanosine(1835) in 23S rRNA + S-adenosyl-L-homocysteine + H(+). Functionally, specifically methylates the guanine in position 1835 (m2G1835) of 23S rRNA. In Shigella flexneri, this protein is Ribosomal RNA large subunit methyltransferase G.